We begin with the raw amino-acid sequence, 210 residues long: Uracil phosphoribosyltransferase (210 aa).

Residues Arg78, Arg103, and 130-138 contribute to the 5-phospho-alpha-D-ribose 1-diphosphate site; that span reads DPMLATGGS. Uracil contacts are provided by residues Ile193 and 198 to 200; that span reads GDA. Asp199 contributes to the 5-phospho-alpha-D-ribose 1-diphosphate binding site.

This sequence belongs to the UPRTase family. Mg(2+) serves as cofactor.

The catalysed reaction is UMP + diphosphate = 5-phospho-alpha-D-ribose 1-diphosphate + uracil. Its pathway is pyrimidine metabolism; UMP biosynthesis via salvage pathway; UMP from uracil: step 1/1. With respect to regulation, allosterically activated by GTP. Catalyzes the conversion of uracil and 5-phospho-alpha-D-ribose 1-diphosphate (PRPP) to UMP and diphosphate. In Salinibacter ruber (strain DSM 13855 / M31), this protein is Uracil phosphoribosyltransferase.